Here is a 250-residue protein sequence, read N- to C-terminus: tRNA (guanine-N(1)-)-methyltransferase (250 aa).

S-adenosyl-L-methionine-binding positions include Gly-116 and 136 to 141 (IGDYVL).

It belongs to the RNA methyltransferase TrmD family. As to quaternary structure, homodimer.

The protein localises to the cytoplasm. It catalyses the reaction guanosine(37) in tRNA + S-adenosyl-L-methionine = N(1)-methylguanosine(37) in tRNA + S-adenosyl-L-homocysteine + H(+). Specifically methylates guanosine-37 in various tRNAs. The sequence is that of tRNA (guanine-N(1)-)-methyltransferase from Pseudomonas putida (strain W619).